Consider the following 351-residue polypeptide: Holliday junction branch migration complex subunit RuvB (351 aa).

Residues 1–12 show a composition bias toward acidic residues; it reads MGRFEDDAEVED. A disordered region spans residues 1-23; sequence MGRFEDDAEVEDREVSPALTVGE. Residues 1–191 form a large ATPase domain (RuvB-L) region; it reads MGRFEDDAEV…FGFTAHMDFY (191 aa). ATP-binding positions include L30, R31, G72, K75, T76, S77, 138–140, R181, Y191, and R228; that span reads EDF. T76 lines the Mg(2+) pocket. The small ATPAse domain (RuvB-S) stretch occupies residues 192 to 262; the sequence is EPVELERVLA…IAKSALEVYD (71 aa). The interval 265-351 is head domain (RuvB-H); the sequence is ELGLDRLDRA…TGIGQAGLFD (87 aa). DNA contacts are provided by R320 and R325.

Belongs to the RuvB family. As to quaternary structure, homohexamer. Forms an RuvA(8)-RuvB(12)-Holliday junction (HJ) complex. HJ DNA is sandwiched between 2 RuvA tetramers; dsDNA enters through RuvA and exits via RuvB. An RuvB hexamer assembles on each DNA strand where it exits the tetramer. Each RuvB hexamer is contacted by two RuvA subunits (via domain III) on 2 adjacent RuvB subunits; this complex drives branch migration. In the full resolvosome a probable DNA-RuvA(4)-RuvB(12)-RuvC(2) complex forms which resolves the HJ.

It is found in the cytoplasm. The enzyme catalyses ATP + H2O = ADP + phosphate + H(+). In terms of biological role, the RuvA-RuvB-RuvC complex processes Holliday junction (HJ) DNA during genetic recombination and DNA repair, while the RuvA-RuvB complex plays an important role in the rescue of blocked DNA replication forks via replication fork reversal (RFR). RuvA specifically binds to HJ cruciform DNA, conferring on it an open structure. The RuvB hexamer acts as an ATP-dependent pump, pulling dsDNA into and through the RuvAB complex. RuvB forms 2 homohexamers on either side of HJ DNA bound by 1 or 2 RuvA tetramers; 4 subunits per hexamer contact DNA at a time. Coordinated motions by a converter formed by DNA-disengaged RuvB subunits stimulates ATP hydrolysis and nucleotide exchange. Immobilization of the converter enables RuvB to convert the ATP-contained energy into a lever motion, pulling 2 nucleotides of DNA out of the RuvA tetramer per ATP hydrolyzed, thus driving DNA branch migration. The RuvB motors rotate together with the DNA substrate, which together with the progressing nucleotide cycle form the mechanistic basis for DNA recombination by continuous HJ branch migration. Branch migration allows RuvC to scan DNA until it finds its consensus sequence, where it cleaves and resolves cruciform DNA. This chain is Holliday junction branch migration complex subunit RuvB, found in Mycolicibacterium smegmatis (strain ATCC 700084 / mc(2)155) (Mycobacterium smegmatis).